Reading from the N-terminus, the 777-residue chain is Beta-hexosaminidase (777 aa).

Positions 1 to 18 (MKRLTFGACICCLLSLMA) are cleaved as a signal peptide. C19 carries the N-palmitoyl cysteine lipid modification. C19 carries the S-diacylglycerol cysteine lipid modification. Residues 625–766 (APKPGLTIRT…VMIRLKGEEK (142 aa)) enclose the PA14 domain.

The protein belongs to the glycosyl hydrolase 20 family.

The protein localises to the cell outer membrane. It catalyses the reaction Hydrolysis of terminal non-reducing N-acetyl-D-hexosamine residues in N-acetyl-beta-D-hexosaminides.. In Porphyromonas gingivalis (strain ATCC BAA-308 / W83), this protein is Beta-hexosaminidase (nahA).